Reading from the N-terminus, the 482-residue chain is Malvidin galactosylase UGT88C3 (482 aa).

Catalysis depends on His-16, which acts as the Proton acceptor. The active-site Charge relay is the Asp-117. 7 residues coordinate UDP: Ser-279, Trp-345, Ala-349, His-366, Asn-370, Ser-371, and Glu-374.

This sequence belongs to the UDP-glycosyltransferase family. As to expression, highly expressed in leaves, sheaths, pistils and embryos, observed in stems, stem nodes and panicles, and present at low levels in roots.

Its subcellular location is the endoplasmic reticulum. It is found in the nucleus. It catalyses the reaction malvidin + UDP-alpha-D-galactose = malvidin 3-O-beta-D-galactoside + UDP + H(+). Its pathway is pigment biosynthesis; anthocyanin biosynthesis. Functionally, UDP-glycosyltransferase which uses UDP-galactose and malvidin as substrates to catalyze the biosynthesis of malvidin 3-O-galactoside, an anthocyanin conferring purple pigmentation. The chain is Malvidin galactosylase UGT88C3 from Oryza sativa subsp. japonica (Rice).